The chain runs to 171 residues: 3-hydroxydecanoyl-[acyl-carrier-protein] dehydratase (171 aa).

The active site involves His70.

This sequence belongs to the thioester dehydratase family. FabA subfamily. Homodimer.

It localises to the cytoplasm. It catalyses the reaction a (3R)-hydroxyacyl-[ACP] = a (2E)-enoyl-[ACP] + H2O. The catalysed reaction is (3R)-hydroxydecanoyl-[ACP] = (2E)-decenoyl-[ACP] + H2O. It carries out the reaction (2E)-decenoyl-[ACP] = (3Z)-decenoyl-[ACP]. It functions in the pathway lipid metabolism; fatty acid biosynthesis. In terms of biological role, necessary for the introduction of cis unsaturation into fatty acids. Catalyzes the dehydration of (3R)-3-hydroxydecanoyl-ACP to E-(2)-decenoyl-ACP and then its isomerization to Z-(3)-decenoyl-ACP. Can catalyze the dehydratase reaction for beta-hydroxyacyl-ACPs with saturated chain lengths up to 16:0, being most active on intermediate chain length. The protein is 3-hydroxydecanoyl-[acyl-carrier-protein] dehydratase of Pseudomonas putida (strain GB-1).